The primary structure comprises 86 residues: MARVTIEDCLDNVDNRFELVLVASKRARQLAKGIAEPLVDVDNDKPTVLALREIAAGKITRDILNQPEHNFATSSLDLALSGDHSF.

This sequence belongs to the RNA polymerase subunit omega family. As to quaternary structure, the RNAP catalytic core consists of 2 alpha, 1 beta, 1 beta' and 1 omega subunit. When a sigma factor is associated with the core the holoenzyme is formed, which can initiate transcription.

It carries out the reaction RNA(n) + a ribonucleoside 5'-triphosphate = RNA(n+1) + diphosphate. In terms of biological role, promotes RNA polymerase assembly. Latches the N- and C-terminal regions of the beta' subunit thereby facilitating its interaction with the beta and alpha subunits. The chain is DNA-directed RNA polymerase subunit omega from Psychrobacter arcticus (strain DSM 17307 / VKM B-2377 / 273-4).